Reading from the N-terminus, the 403-residue chain is Phosphoglycerate kinase (403 aa).

Residues 22-24 (DLN), Arg37, 60-63 (HLGN), Arg119, and Arg152 each bind substrate. ATP-binding positions include Lys202, Glu325, and 355–358 (GGDT).

The protein belongs to the phosphoglycerate kinase family. Monomer.

The protein resides in the cytoplasm. The enzyme catalyses (2R)-3-phosphoglycerate + ATP = (2R)-3-phospho-glyceroyl phosphate + ADP. It participates in carbohydrate degradation; glycolysis; pyruvate from D-glyceraldehyde 3-phosphate: step 2/5. The protein is Phosphoglycerate kinase of Orientia tsutsugamushi (strain Boryong) (Rickettsia tsutsugamushi).